The chain runs to 427 residues: GTPase Obg (427 aa).

Residues 1 to 158 (MFVDIAKIYV…LWVILELKVL (158 aa)) enclose the Obg domain. The 172-residue stretch at 159-330 (ADVGLIGYPN…VLKRAYELLK (172 aa)) folds into the OBG-type G domain. GTP contacts are provided by residues 165-172 (GYPNVGKS), 190-194 (FTTKY), 212-215 (DIPG), 282-285 (NKMD), and 311-313 (SAA). Residues serine 172 and threonine 192 each coordinate Mg(2+). Positions 347-427 (FVYYKKKDVK…ILDVEFEYYE (81 aa)) constitute an OCT domain.

It belongs to the TRAFAC class OBG-HflX-like GTPase superfamily. OBG GTPase family. Monomer. Mg(2+) serves as cofactor.

It localises to the cytoplasm. Its function is as follows. An essential GTPase which binds GTP, GDP and possibly (p)ppGpp with moderate affinity, with high nucleotide exchange rates and a fairly low GTP hydrolysis rate. Plays a role in control of the cell cycle, stress response, ribosome biogenesis and in those bacteria that undergo differentiation, in morphogenesis control. This is GTPase Obg from Caldicellulosiruptor saccharolyticus (strain ATCC 43494 / DSM 8903 / Tp8T 6331).